A 319-amino-acid chain; its full sequence is tRNA pseudouridine synthase B (319 aa).

D49 functions as the Nucleophile in the catalytic mechanism.

The protein belongs to the pseudouridine synthase TruB family. Type 1 subfamily.

It carries out the reaction uridine(55) in tRNA = pseudouridine(55) in tRNA. In terms of biological role, responsible for synthesis of pseudouridine from uracil-55 in the psi GC loop of transfer RNAs. This chain is tRNA pseudouridine synthase B, found in Bartonella henselae (strain ATCC 49882 / DSM 28221 / CCUG 30454 / Houston 1) (Rochalimaea henselae).